The following is a 24-amino-acid chain: Attacin (24 aa).

This sequence belongs to the attacin/sarcotoxin-2 family.

It localises to the secreted. Functionally, hemolymph antibacterial protein. The sequence is that of Attacin from Heliothis virescens (Tobacco budworm moth).